We begin with the raw amino-acid sequence, 233 residues long: Sugar fermentation stimulation protein homolog (233 aa).

Belongs to the SfsA family.

This is Sugar fermentation stimulation protein homolog from Teredinibacter turnerae (strain ATCC 39867 / T7901).